Here is a 747-residue protein sequence, read N- to C-terminus: AT-rich interactive domain-containing protein 4 (747 aa).

A disordered region spans residues 454–475 (PLPTRKRSEPCRESKEIENGGP). A compositionally biased stretch (basic and acidic residues) spans 459–471 (KRSEPCRESKEIE). The ARID domain occupies 566–670 (VCSEEEFLRD…YLLEYEYAHD (105 aa)). The segment at 674–730 (GECCLICRSSTAGDWVNCGSCGEWAHFGCDRRPGLGAFKDYAKTDGLEYVCPNCSVS) adopts a PHD-type zinc-finger fold.

The protein localises to the nucleus. This Arabidopsis thaliana (Mouse-ear cress) protein is AT-rich interactive domain-containing protein 4 (ARID4).